Here is a 353-residue protein sequence, read N- to C-terminus: Photosystem II protein D1 (353 aa).

An N-acetylthreonine modification is found at Thr2. Residue Thr2 is modified to Phosphothreonine. Transmembrane regions (helical) follow at residues 29-46 (YIGW…TATS), 118-133 (HFLL…EWEL), and 142-156 (WIAV…AATA). His118 lines the chlorophyll a pocket. Tyr126 contributes to the pheophytin a binding site. Residues Asp170 and Glu189 each contribute to the [CaMn4O5] cluster site. A helical membrane pass occupies residues 197 to 218 (FHMLGVAGVFGGSLFSAMHGSL). His198 lines the chlorophyll a pocket. A quinone is bound by residues His215 and 264 to 265 (SF). Position 215 (His215) interacts with Fe cation. His272 lines the Fe cation pocket. Residues 274 to 288 (FLAAWPVVGIWFTAL) traverse the membrane as a helical segment. The [CaMn4O5] cluster site is built by His332, Glu333, Asp342, and Ala344. A propeptide spanning residues 345-353 (ALEVPYLNG) is cleaved from the precursor.

This sequence belongs to the reaction center PufL/M/PsbA/D family. As to quaternary structure, PSII is composed of 1 copy each of membrane proteins PsbA, PsbB, PsbC, PsbD, PsbE, PsbF, PsbH, PsbI, PsbJ, PsbK, PsbL, PsbM, PsbT, PsbX, PsbY, PsbZ, Psb30/Ycf12, at least 3 peripheral proteins of the oxygen-evolving complex and a large number of cofactors. It forms dimeric complexes. Requires The D1/D2 heterodimer binds P680, chlorophylls that are the primary electron donor of PSII, and subsequent electron acceptors. It shares a non-heme iron and each subunit binds pheophytin, quinone, additional chlorophylls, carotenoids and lipids. D1 provides most of the ligands for the Mn4-Ca-O5 cluster of the oxygen-evolving complex (OEC). There is also a Cl(-1) ion associated with D1 and D2, which is required for oxygen evolution. The PSII complex binds additional chlorophylls, carotenoids and specific lipids. as cofactor. Phosphorylated in both bundle sheath and mesophyll cells, phosphorylation increases when cells are grown under high rather than low light regimes (70 vs 900 umol photons/m-2/s). In terms of processing, PSII is subject to light-induced damage, in particular to D1. Damaged protein is degraded by Deg1 and FtsH proteases and replaced. In maize mesophyll cells D1 degradation is less extensive in grana (stacked) vs stroma (unstacked) lamellae, in part due to exclusion of FtsH from the grana. D1 degradation is faster in bundle sheath cells. Post-translationally, tyr-161 forms a radical intermediate that is referred to as redox-active TyrZ, YZ or Y-Z. C-terminally processed by CTPA; processing is essential to allow assembly of the oxygen-evolving complex and thus photosynthetic growth.

Its subcellular location is the plastid. The protein localises to the chloroplast thylakoid membrane. The catalysed reaction is 2 a plastoquinone + 4 hnu + 2 H2O = 2 a plastoquinol + O2. Its function is as follows. Photosystem II (PSII) is a light-driven water:plastoquinone oxidoreductase that uses light energy to abstract electrons from H(2)O, generating O(2) and a proton gradient subsequently used for ATP formation. It consists of a core antenna complex that captures photons, and an electron transfer chain that converts photonic excitation into a charge separation. The D1/D2 (PsbA/PsbD) reaction center heterodimer binds P680, the primary electron donor of PSII as well as several subsequent electron acceptors. The sequence is that of Photosystem II protein D1 from Zea mays (Maize).